The sequence spans 368 residues: MASLTGAKRVVVKIGSALLVDRHTGDLRADWLAALADDIAALKGAGTDVILVSSGAIALGRGVLALGDGALSLDEAQAAAAVGQIRLARAYEEVLAPLGLTSAQILLTLDDSADRRRYLNTRATFAALLARGAVPIVNENDTIATDEIRYGDNDRLAANVAVMAGADICVLLSDVDGLYTANPNDDTTAAHLPVIDTITPEIEAMAGDAGSGLSKGGMKTKVLAARTATAAGCAMAITQGAIANPLRALDDGARATWFTATVSPQQARKAWIGAMKPKGSLRLDAGAAAALSRGKSLLPAGVVAVTGDFLRGDPVRLEAPDGAAIGIGLSRYGAKEALAIQGHQSDEIPEILGYPGRAALVHRDDMVL.

K13 is a binding site for ATP. 3 residues coordinate substrate: S54, D141, and N153. Residue 173-174 (SD) coordinates ATP. The PUA domain occupies 278–355 (KGSLRLDAGA…DEIPEILGYP (78 aa)).

It belongs to the glutamate 5-kinase family.

It localises to the cytoplasm. It carries out the reaction L-glutamate + ATP = L-glutamyl 5-phosphate + ADP. Its pathway is amino-acid biosynthesis; L-proline biosynthesis; L-glutamate 5-semialdehyde from L-glutamate: step 1/2. Catalyzes the transfer of a phosphate group to glutamate to form L-glutamate 5-phosphate. The polypeptide is Glutamate 5-kinase (Jannaschia sp. (strain CCS1)).